A 572-amino-acid polypeptide reads, in one-letter code: Galectin-3-binding protein B (572 aa).

Positions 1 to 14 (MLLLWPLLFLQVSA) are cleaved as a signal peptide. An SRCR domain is found at 32-131 (VRLVGVIPSS…HKEDAGVICA (100 aa)). Cystine bridges form between C56–C120, C69–C130, and C100–C110. N-linked (GlcNAc...) asparagine glycosylation is found at N135, N195, and N202. In terms of domain architecture, BTB spans 164 to 231 (CDFTIAVRDL…LYTRQIDVST (68 aa)). In terms of domain architecture, BACK spans 270-372 (QVSMYEYGVR…IPVDKLYDIQ (103 aa)). N-linked (GlcNAc...) asparagine glycosylation is found at N430 and N548.

The protein resides in the secreted. It is found in the extracellular space. Its subcellular location is the extracellular matrix. Promotes integrin-mediated cell adhesion. In Danio rerio (Zebrafish), this protein is Galectin-3-binding protein B (lgals3bpb).